Here is a 251-residue protein sequence, read N- to C-terminus: Ribosomal RNA small subunit methyltransferase J (251 aa).

Residues Arg-100–Asp-101, Glu-116–Arg-117, and Asp-170 each bind S-adenosyl-L-methionine.

The protein belongs to the methyltransferase superfamily. RsmJ family.

It is found in the cytoplasm. The catalysed reaction is guanosine(1516) in 16S rRNA + S-adenosyl-L-methionine = N(2)-methylguanosine(1516) in 16S rRNA + S-adenosyl-L-homocysteine + H(+). In terms of biological role, specifically methylates the guanosine in position 1516 of 16S rRNA. The polypeptide is Ribosomal RNA small subunit methyltransferase J (Actinobacillus pleuropneumoniae serotype 5b (strain L20)).